A 515-amino-acid polypeptide reads, in one-letter code: Vacuolar fusion protein CCZ1 homolog A (515 aa).

It belongs to the CCZ1 family. Interacts with MON1.

The protein resides in the endosome. It is found in the prevacuolar compartment. Functionally, plays an important role in membrane trafficking through the secretory apparatus. In complex with MON1, acts as a guanine exchange factor (GEF) for RABG3F of the Rab7 protein family. Promotes the exchange of GDP to GTP, converting RABG3F from an inactive GDP-bound form into an active GTP-bound form. The RABG3F active form is involved in protein trafficking from prevacuolar compartments (PVCs) to vacuoles. May serve as a linker between Rab5 and Rab7 protein families in PVCs and mediate PVC maturation. The polypeptide is Vacuolar fusion protein CCZ1 homolog A (Arabidopsis thaliana (Mouse-ear cress)).